Consider the following 161-residue polypeptide: Phosphopantetheine adenylyltransferase (161 aa).

Substrate is bound at residue S9. ATP is bound by residues 9 to 10 and H17; that span reads SF. Residues K41, L73, and K87 each contribute to the substrate site. ATP is bound by residues 88–90, E98, and 123–129; these read GLR and YSYLSSS.

The protein belongs to the bacterial CoaD family. As to quaternary structure, homohexamer. Mg(2+) serves as cofactor.

Its subcellular location is the cytoplasm. It carries out the reaction (R)-4'-phosphopantetheine + ATP + H(+) = 3'-dephospho-CoA + diphosphate. The protein operates within cofactor biosynthesis; coenzyme A biosynthesis; CoA from (R)-pantothenate: step 4/5. Functionally, reversibly transfers an adenylyl group from ATP to 4'-phosphopantetheine, yielding dephospho-CoA (dPCoA) and pyrophosphate. This chain is Phosphopantetheine adenylyltransferase, found in Clostridium novyi (strain NT).